The sequence spans 324 residues: Putative S-adenosyl-L-methionine-dependent methyltransferase MMAR_1059 (324 aa).

S-adenosyl-L-methionine contacts are provided by residues Asp138 and 167 to 168; that span reads DL.

Belongs to the UPF0677 family.

In terms of biological role, exhibits S-adenosyl-L-methionine-dependent methyltransferase activity. The sequence is that of Putative S-adenosyl-L-methionine-dependent methyltransferase MMAR_1059 from Mycobacterium marinum (strain ATCC BAA-535 / M).